The primary structure comprises 185 residues: Elongation factor P (185 aa).

This sequence belongs to the elongation factor P family.

It localises to the cytoplasm. The protein operates within protein biosynthesis; polypeptide chain elongation. Functionally, involved in peptide bond synthesis. Stimulates efficient translation and peptide-bond synthesis on native or reconstituted 70S ribosomes in vitro. Probably functions indirectly by altering the affinity of the ribosome for aminoacyl-tRNA, thus increasing their reactivity as acceptors for peptidyl transferase. In Acetivibrio thermocellus (strain ATCC 27405 / DSM 1237 / JCM 9322 / NBRC 103400 / NCIMB 10682 / NRRL B-4536 / VPI 7372) (Clostridium thermocellum), this protein is Elongation factor P.